Here is a 360-residue protein sequence, read N- to C-terminus: D-alanine--D-alanine ligase (360 aa).

The ATP-grasp domain occupies 149 to 353; sequence KKLMAAEGLP…YEELLDVLVQ (205 aa). Position 176 to 231 (176 to 231) interacts with ATP; the sequence is KNLLGLPVFVKPARGGSSIGISRVTAWEDFNKAVGLARAHDEKVIVESEIVGSEVE. Asp308, Glu320, and Asn322 together coordinate Mg(2+).

It belongs to the D-alanine--D-alanine ligase family. Mg(2+) is required as a cofactor. Requires Mn(2+) as cofactor.

Its subcellular location is the cytoplasm. It carries out the reaction 2 D-alanine + ATP = D-alanyl-D-alanine + ADP + phosphate + H(+). It functions in the pathway cell wall biogenesis; peptidoglycan biosynthesis. Cell wall formation. This chain is D-alanine--D-alanine ligase, found in Corynebacterium glutamicum (strain R).